Reading from the N-terminus, the 211-residue chain is MDSNSWINCPPVFSSSPSSRRYQSRSDLYLGDVEGEDDLKAEFMCPFCADEFDIVGLCCHIDVNHPVEAKNGVCPVCTKKVGLDIVGHITTQHGNVFKVQRRRRLRKGGYSSTYLTLKKELREANLQSLGGSSTFIPSSNIDSDPLLSSFMFKPPSAIPITEGDSVAQVSPKDTSKSKIQQESFSNEDQEKAKKSKFVRGLLWSTMLEDKF.

T113 is subject to Phosphothreonine. The segment at 163–194 (GDSVAQVSPKDTSKSKIQQESFSNEDQEKAKK) is disordered. Positions 167–186 (AQVSPKDTSKSKIQQESFSN) are enriched in polar residues.

Belongs to the Di19 family. Not phosphorylated in vitro by CPK3 or CPK11. In terms of tissue distribution, expressed in seedlings, roots, leaves, stems, flowers and siliques.

The protein resides in the nucleus. Its function is as follows. Involved in both red and blue light signaling. This is Protein DEHYDRATION-INDUCED 19 homolog 7 (DI19-7) from Arabidopsis thaliana (Mouse-ear cress).